The chain runs to 432 residues: Adenylosuccinate synthetase (432 aa).

Residues 13–19 (GDEGKGK) and 41–43 (GHT) contribute to the GTP site. Asp14 acts as the Proton acceptor in catalysis. Mg(2+) contacts are provided by Asp14 and Gly41. IMP contacts are provided by residues 14-17 (DEGK), 39-42 (NAGH), Thr130, Arg144, Gln225, Thr240, and Arg304. The active-site Proton donor is the His42. Substrate is bound at residue 300–306 (ATTGRRR). GTP-binding positions include Arg306, 332–334 (KLD), and 415–417 (STG).

This sequence belongs to the adenylosuccinate synthetase family. As to quaternary structure, homodimer. It depends on Mg(2+) as a cofactor.

Its subcellular location is the cytoplasm. The enzyme catalyses IMP + L-aspartate + GTP = N(6)-(1,2-dicarboxyethyl)-AMP + GDP + phosphate + 2 H(+). Its pathway is purine metabolism; AMP biosynthesis via de novo pathway; AMP from IMP: step 1/2. Plays an important role in the de novo pathway of purine nucleotide biosynthesis. Catalyzes the first committed step in the biosynthesis of AMP from IMP. The sequence is that of Adenylosuccinate synthetase from Salmonella agona (strain SL483).